Here is a 303-residue protein sequence, read N- to C-terminus: Protoheme IX farnesyltransferase (303 aa).

9 consecutive transmembrane segments (helical) span residues 30-50 (VMSL…STVS), 54-74 (AMIA…LNMW), 101-121 (ALIF…YFAN), 123-143 (ISAV…TIWL), 150-170 (NIVI…TIAT), 178-198 (ITFF…LSLY), 219-241 (STKI…PYAI), 245-262 (GLVF…YNIL), and 279-299 (AKTI…IFLI).

The protein belongs to the UbiA prenyltransferase family. Protoheme IX farnesyltransferase subfamily.

It localises to the cell inner membrane. The enzyme catalyses heme b + (2E,6E)-farnesyl diphosphate + H2O = Fe(II)-heme o + diphosphate. Its pathway is porphyrin-containing compound metabolism; heme O biosynthesis; heme O from protoheme: step 1/1. In terms of biological role, converts heme B (protoheme IX) to heme O by substitution of the vinyl group on carbon 2 of heme B porphyrin ring with a hydroxyethyl farnesyl side group. The polypeptide is Protoheme IX farnesyltransferase (Pelagibacter ubique (strain HTCC1062)).